Here is a 204-residue protein sequence, read N- to C-terminus: LexA repressor (204 aa).

Positions 27–47 form a DNA-binding region, H-T-H motif; sequence VREIGEAVGLASSSTVHGHLA. Residues S126 and K164 each act as for autocatalytic cleavage activity in the active site.

This sequence belongs to the peptidase S24 family. Homodimer.

The enzyme catalyses Hydrolysis of Ala-|-Gly bond in repressor LexA.. Represses a number of genes involved in the response to DNA damage (SOS response), including recA and lexA. In the presence of single-stranded DNA, RecA interacts with LexA causing an autocatalytic cleavage which disrupts the DNA-binding part of LexA, leading to derepression of the SOS regulon and eventually DNA repair. This is LexA repressor from Listeria innocua serovar 6a (strain ATCC BAA-680 / CLIP 11262).